Reading from the N-terminus, the 429-residue chain is Alanine aminotransferase (429 aa).

2 residues coordinate L-alanine: G65 and N204. At K265 the chain carries N6-(pyridoxal phosphate)lysine. R403 is an L-alanine binding site.

Belongs to the class-I pyridoxal-phosphate-dependent aminotransferase family. As to quaternary structure, homodimer. The cofactor is pyridoxal 5'-phosphate.

The protein localises to the cytoplasm. It carries out the reaction L-alanine + 2-oxoglutarate = pyruvate + L-glutamate. This is Alanine aminotransferase (aspC) from Mycobacterium bovis (strain ATCC BAA-935 / AF2122/97).